A 275-amino-acid polypeptide reads, in one-letter code: Protein CIMAP1C (275 aa).

STPGR repeat units follow at residues 200-225 and 236-261; these read PGPAMHTRPEPSVYQNRSPLFSMAKR and PGPGSHDIQPVTVHKPRIPAFTMGIK.

It belongs to the CIMAP family.

The sequence is that of Protein CIMAP1C (CIMAP1C) from Mus musculus (Mouse).